A 428-amino-acid chain; its full sequence is C4-dicarboxylate transport protein (428 aa).

8 consecutive transmembrane segments (helical) span residues 8–28 (VLYVQVIFAIVVGVILGHYYP), 44–64 (LIKMVIGPIIFCTVVTGIAGM), 78–98 (LLYFEIVSTCALVLGLAATHI), 148–168 (GEILQILLIALLFGSVLAHLG), 184–204 (VLFGIVHIVTKLAPIGAFGAM), 222–242 (LIGTFYLTSVVFVLVVLGAIA), 307–327 (IYMTMAVLFIAQATNIELTWM), and 355–375 (AATLAVVPTIPLSGMVLILGI).

Belongs to the dicarboxylate/amino acid:cation symporter (DAACS) (TC 2.A.23) family.

It localises to the cell inner membrane. In terms of biological role, responsible for the transport of dicarboxylates such as succinate, fumarate, and malate from the periplasm across the membrane. The polypeptide is C4-dicarboxylate transport protein (Burkholderia pseudomallei (strain 1106a)).